The sequence spans 475 residues: Ribulose bisphosphate carboxylase large chain (475 aa).

Positions 1–2 are excised as a propeptide; that stretch reads MS. Pro-3 carries the N-acetylproline modification. An N6,N6,N6-trimethyllysine modification is found at Lys-14. Residues Asn-123 and Thr-173 each coordinate substrate. Lys-175 acts as the Proton acceptor in catalysis. Residue Lys-177 coordinates substrate. Residues Lys-201, Asp-203, and Glu-204 each contribute to the Mg(2+) site. N6-carboxylysine is present on Lys-201. The Proton acceptor role is filled by His-294. Residues Arg-295, His-327, and Ser-379 each coordinate substrate.

It belongs to the RuBisCO large chain family. Type I subfamily. In terms of assembly, heterohexadecamer of 8 large chains and 8 small chains; disulfide-linked. The disulfide link is formed within the large subunit homodimers. Requires Mg(2+) as cofactor. The disulfide bond which can form in the large chain dimeric partners within the hexadecamer appears to be associated with oxidative stress and protein turnover.

Its subcellular location is the plastid. The protein localises to the chloroplast. It carries out the reaction 2 (2R)-3-phosphoglycerate + 2 H(+) = D-ribulose 1,5-bisphosphate + CO2 + H2O. The enzyme catalyses D-ribulose 1,5-bisphosphate + O2 = 2-phosphoglycolate + (2R)-3-phosphoglycerate + 2 H(+). In terms of biological role, ruBisCO catalyzes two reactions: the carboxylation of D-ribulose 1,5-bisphosphate, the primary event in carbon dioxide fixation, as well as the oxidative fragmentation of the pentose substrate in the photorespiration process. Both reactions occur simultaneously and in competition at the same active site. The chain is Ribulose bisphosphate carboxylase large chain from Buxus microphylla (Littleleaf boxwood).